Here is a 174-residue protein sequence, read N- to C-terminus: Ribosome maturation factor RimM (174 aa).

The PRC barrel domain maps to 101–174 (AGEFYLADLC…IELLQRWILE (74 aa)).

This sequence belongs to the RimM family. In terms of assembly, binds ribosomal protein uS19.

It is found in the cytoplasm. An accessory protein needed during the final step in the assembly of 30S ribosomal subunit, possibly for assembly of the head region. Essential for efficient processing of 16S rRNA. May be needed both before and after RbfA during the maturation of 16S rRNA. It has affinity for free ribosomal 30S subunits but not for 70S ribosomes. The polypeptide is Ribosome maturation factor RimM (Treponema pallidum (strain Nichols)).